A 69-amino-acid chain; its full sequence is MASVFSFLLMSAAGFPTLSTDSSIRSSRNALTLLRWICEAVSAAVPVSRPSANCVTYKAVISKFIARIA.

This is an uncharacterized protein from Treponema pallidum (strain Nichols).